A 662-amino-acid polypeptide reads, in one-letter code: PAN2-PAN3 deadenylation complex subunit PAN3 (662 aa).

2 disordered regions span residues 1-26 (MASA…AREN) and 59-131 (TTYQ…RAET). Residues 26–55 (NAKDTLCRNVTIYGRCRYEDKGCAFNHDPH) form a C3H1-type zinc finger. A compositionally biased stretch (polar residues) spans 72–85 (DSPSFTPSLLSSNG). Over residues 86-102 (SSPTTASVTAKKAATIS) the composition is skewed to low complexity. The segment covering 114–126 (RNITSRSNTSTPS) has biased composition (polar residues). The tract at residues 265–525 (QTLPNTQLPA…NIDIFITGIS (261 aa)) is pseudokinase domain. ATP contacts are provided by residues arginine 317, 366 to 373 (DYHPLSKT), and 425 to 426 (SK). The stretch at 526 to 564 (SQLMSTFDSALHLDDELTSDLSRELENGRLVRLVTKLNF) forms a coiled coil. Residues 565-662 (VNERPEYEHD…ALLKPTRRLH (98 aa)) form a knob domain region.

The protein belongs to the protein kinase superfamily. PAN3 family. Homodimer. Forms a heterotrimer with a catalytic subunit pan2 to form the poly(A)-nuclease (PAN) deadenylation complex. Interacts (via PAM-2 motif) with poly(A)-binding protein pab1 (via PABC domain), conferring substrate specificity of the enzyme complex.

The protein localises to the cytoplasm. Its function is as follows. Regulatory subunit of the poly(A)-nuclease (PAN) deadenylation complex, one of two cytoplasmic mRNA deadenylases involved in mRNA turnover. PAN specifically shortens poly(A) tails of RNA and the activity is stimulated by poly(A)-binding protein pab1. PAN deadenylation is followed by rapid degradation of the shortened mRNA tails by the CCR4-NOT complex. Deadenylated mRNAs are then degraded by two alternative mechanisms, namely exosome-mediated 3'-5' exonucleolytic degradation, or deadenylation-dependent mRNA decaping and subsequent 5'-3' exonucleolytic degradation by xrn1. May also be involved in post-transcriptional maturation of mRNA poly(A) tails. pan3 acts as a positive regulator for PAN activity, recruiting the catalytic subunit pan2 to mRNA via its interaction with RNA and with pab1. This is PAN2-PAN3 deadenylation complex subunit PAN3 from Aspergillus oryzae (strain ATCC 42149 / RIB 40) (Yellow koji mold).